The following is a 149-amino-acid chain: Secreted RxLR effector protein 47 (149 aa).

The first 22 residues, M1–A22, serve as a signal peptide directing secretion. Positions R57 to R79 match the RxLR-dEER motif.

Belongs to the RxLR effector family.

The protein localises to the secreted. It is found in the host membrane. In terms of biological role, secreted effector that completely suppresses the host cell death induced by cell death-inducing proteins. In Plasmopara viticola (Downy mildew of grapevine), this protein is Secreted RxLR effector protein 47.